The following is a 148-amino-acid chain: MSDSVEIYTDGACKGNPGPGGWGVLMVFKGVEKELWGGERETTNNRMELMAAIEGLKALKRECEVVLTTDSQYVMKGINEWMVNWKKRGWKTAAKEPVKNADLWMALDEQVNRHKVTWKWVRGHIGHPGNERADQLANRGVDEVRAQR.

Residues 1 to 142 (MSDSVEIYTD…ADQLANRGVD (142 aa)) enclose the RNase H type-1 domain. Residues aspartate 10, glutamate 48, aspartate 70, and aspartate 134 each contribute to the Mg(2+) site. Positions 129-148 (GNERADQLANRGVDEVRAQR) are disordered.

This sequence belongs to the RNase H family. In terms of assembly, monomer. Requires Mg(2+) as cofactor.

The protein resides in the cytoplasm. The enzyme catalyses Endonucleolytic cleavage to 5'-phosphomonoester.. Endonuclease that specifically degrades the RNA of RNA-DNA hybrids. This Pseudomonas entomophila (strain L48) protein is Ribonuclease H.